A 305-amino-acid chain; its full sequence is UDP-3-O-acyl-N-acetylglucosamine deacetylase (305 aa).

The Zn(2+) site is built by His78, His237, and Asp241. The active-site Proton donor is His264.

The protein belongs to the LpxC family. The cofactor is Zn(2+).

It catalyses the reaction a UDP-3-O-[(3R)-3-hydroxyacyl]-N-acetyl-alpha-D-glucosamine + H2O = a UDP-3-O-[(3R)-3-hydroxyacyl]-alpha-D-glucosamine + acetate. Its pathway is glycolipid biosynthesis; lipid IV(A) biosynthesis; lipid IV(A) from (3R)-3-hydroxytetradecanoyl-[acyl-carrier-protein] and UDP-N-acetyl-alpha-D-glucosamine: step 2/6. Functionally, catalyzes the hydrolysis of UDP-3-O-myristoyl-N-acetylglucosamine to form UDP-3-O-myristoylglucosamine and acetate, the committed step in lipid A biosynthesis. The protein is UDP-3-O-acyl-N-acetylglucosamine deacetylase of Burkholderia multivorans (strain ATCC 17616 / 249).